The primary structure comprises 356 residues: MEKIVVALGKRSYPISIGEGLLTHAELFKSAIKGKRVMIVSNEIVAPLYLACCKETLIDFQIDEIILPDGEKFKNLHTFEIILTALLSNKHARDTTIIALGGGVIGDMAGFAAACYQRGVPFIQVPTTVLSQVDSSVGGKTAVNHPLGKNMIGAFYQPQSVIIDIDCLKTLPAREFSAGMAEVIKYGILYDQAFFIWLEENVTAIKTLQPAAITYMIKRCCEIKAEIVSLDEKEGGIRALLNLGHTFGHAIEAEQGYGNWLHGEAVASGMVLAAKTALNLGLIESAQIEQIILLIKQFDLPVNAPENMHYDQFFDHMQLDKKVLDGKLRLILPTSIGRCEIFDNVSETVLRSVIES.

NAD(+) is bound by residues D69–K74, G103–D107, T127–T128, K140, K149, and C167–T170. Zn(2+) contacts are provided by E182, H245, and H262.

Belongs to the sugar phosphate cyclases superfamily. Dehydroquinate synthase family. Requires Co(2+) as cofactor. Zn(2+) is required as a cofactor. NAD(+) serves as cofactor.

It localises to the cytoplasm. It catalyses the reaction 7-phospho-2-dehydro-3-deoxy-D-arabino-heptonate = 3-dehydroquinate + phosphate. It participates in metabolic intermediate biosynthesis; chorismate biosynthesis; chorismate from D-erythrose 4-phosphate and phosphoenolpyruvate: step 2/7. Functionally, catalyzes the conversion of 3-deoxy-D-arabino-heptulosonate 7-phosphate (DAHP) to dehydroquinate (DHQ). In Psychromonas ingrahamii (strain DSM 17664 / CCUG 51855 / 37), this protein is 3-dehydroquinate synthase.